A 359-amino-acid chain; its full sequence is MAEAITYADLRFVKAPLKKSISSRLGQDPGADDDGEITYENVQVPAVLGVPSSLASSVLGDKAAVKSEQPTASWRAVTSPAVGRILPCRTTCLRYLLLGLLLTCLLLGVTAICLGVRYLQVSQQLQQTNRVLEVTNSSLRQQLRLKITQLGQSAEDLQGSRRELAQSQEALQVEQRAHQAAEGQLQACQADRQKTKETLQSEEQQRRALEQKLSNMENRLKPFFTCGSADTCCPSGWIMHQKSCFYISLTSKNWQESQKQCETLSSKLATFSEIYPQSHSYYFLNSLLPNGGSGNSYWTGLSSNKDWKLTDDTQRTRTYAQSSKCNKVHKTWSWWTLESESCRSSLPYICEMTAFRFPD.

Residues 1-95 (MAEAITYADL…LPCRTTCLRY (95 aa)) lie on the Cytoplasmic side of the membrane. Y7 and Y39 each carry phosphotyrosine; by LYN. The chain crosses the membrane as a helical; Signal-anchor for type II membrane protein span at residues 96–116 (LLLGLLLTCLLLGVTAICLGV). Over 117 to 359 (RYLQVSQQLQ…CEMTAFRFPD (243 aa)) the chain is Extracellular. N136 carries an N-linked (GlcNAc...) asparagine glycan. The 121-residue stretch at 232 to 352 (CCPSGWIMHQ…RSSLPYICEM (121 aa)) folds into the C-type lectin domain. Cystine bridges form between C233-C244, C261-C350, and C325-C342.

Homodimer; disulfide-linked. Associates with CD5. Interacts (tyrosine phosphorylated) with PTPN6/SHP-1. Phosphorylated upon engagement of the B-cell receptor, probably by LYN or SYK. Phosphorylation at Tyr-7 is important for interaction with PTPN6/SHP-1. In terms of tissue distribution, pre-B-cells and B-cells but not terminally differentiated plasma cells.

The protein resides in the membrane. In terms of biological role, co-receptor of B cell receptor (BCR) that plays both positive and negative roles on B-cell functions. Recognizes the Sm/ribonucleoprotein (RNP) self-antigen ligand, and coligation of CD72 and BCR inhibits BCR signaling. Mechanistically, ligand binding leads to the recruitment of PTPN6/SHP-1 to the BCR complex which is inhibitory to BCR signaling. Also acts as a ligand for CD5 and thereby plays a critical role in maintaining regulatory T and B-cell homeostasis. This is B-cell differentiation antigen CD72 (CD72) from Homo sapiens (Human).